A 97-amino-acid polypeptide reads, in one-letter code: Protein C4 (97 aa).

Disordered stretches follow at residues 1-31 (MGLLTCMFSSNSKESSSVRIKDSSISHPHTG) and 75-97 (ANLPTTHMPRQSIQGPKLRPSIY). Residue Gly-2 is the site of N-myristoyl glycine; by host attachment. Polar residues predominate over residues 77 to 88 (LPTTHMPRQSIQ).

The protein belongs to the geminiviridae protein AC4/C4 family.

The protein localises to the host cell membrane. Its function is as follows. Pathogenicity determinant. May act as a suppressor of RNA-mediated gene silencing, also known as post-transcriptional gene silencing (PTGS), a mechanism of plant viral defense that limits the accumulation of viral RNAs. The polypeptide is Protein C4 (Tomato yellow leaf curl China virus (TYLCCNV)).